Here is a 287-residue protein sequence, read N- to C-terminus: Large ribosomal subunit protein uL2 (287 aa).

Residues R221 to S287 are disordered. Basic residues predominate over residues K258–S287.

It belongs to the universal ribosomal protein uL2 family. As to quaternary structure, part of the 50S ribosomal subunit. Forms a bridge to the 30S subunit in the 70S ribosome.

In terms of biological role, one of the primary rRNA binding proteins. Required for association of the 30S and 50S subunits to form the 70S ribosome, for tRNA binding and peptide bond formation. It has been suggested to have peptidyltransferase activity; this is somewhat controversial. Makes several contacts with the 16S rRNA in the 70S ribosome. This Prochlorococcus marinus (strain MIT 9215) protein is Large ribosomal subunit protein uL2.